The sequence spans 721 residues: Long-chain-fatty-acid--CoA ligase ACSBG1 (721 aa).

A disordered region spans residues 1–64; the sequence is MPRSSEAGYC…SHGLELSAPE (64 aa). Positions 26–43 are enriched in polar residues; that stretch reads QQGASMGTSPDNSQTSSL. Phosphoserine is present on residues Ser-34, Ser-50, Ser-53, and Ser-70. ATP-binding positions include 279-287, 469-474, Asp-547, and Arg-562; these read TSGTTGNPK and AGYGLS. Tyr-655 is subject to Phosphotyrosine. Lys-698 is a binding site for ATP.

Belongs to the ATP-dependent AMP-binding enzyme family. Bubblegum subfamily. As to expression, present in testis, at a lower level in brain, and at a very low level in ovary. Not detected in other tissues. tested. Present in Leydig cells of the adult testis and to a lesser degree in the seminiferous tubules in spermatogonia and Sertoli cells (at protein level).

It localises to the cytoplasm. Its subcellular location is the cytoplasmic vesicle. The protein resides in the microsome. The protein localises to the endoplasmic reticulum. It is found in the cell membrane. It carries out the reaction a long-chain fatty acid + ATP + CoA = a long-chain fatty acyl-CoA + AMP + diphosphate. The catalysed reaction is (E)-hexadec-2-enoate + ATP + CoA = (2E)-hexadecenoyl-CoA + AMP + diphosphate. The enzyme catalyses hexadecanoate + ATP + CoA = hexadecanoyl-CoA + AMP + diphosphate. Catalyzes the conversion of fatty acids such as long-chain and very long-chain fatty acids to their active form acyl-CoAs for both synthesis of cellular lipids, and degradation via beta-oxidation. Can activate diverse saturated, monosaturated and polyunsaturated fatty acids. This is Long-chain-fatty-acid--CoA ligase ACSBG1 from Rattus norvegicus (Rat).